We begin with the raw amino-acid sequence, 153 residues long: UPF0756 membrane protein NT01CX_1209 (153 aa).

Helical transmembrane passes span 5–25 (IILLILMFLSFISKNKSLGIA), 45–65 (ENHFMNLGMTFLMIWMLIPII), 83–103 (IVCFLCGAIVAVLASKGVGFL), and 113–133 (IILGSIVGVSLLGGVPVGPLI).

This sequence belongs to the UPF0756 family.

Its subcellular location is the cell membrane. This is UPF0756 membrane protein NT01CX_1209 from Clostridium novyi (strain NT).